The sequence spans 228 residues: Protein TIFY 10a (228 aa).

The region spanning 75–110 (REQEKRQLTIFYGGKVLVFDDFPAEKAKDLMQMASK) is the Tify domain. The short motif at 164–189 (PQARKASLHRFLEKRKDRLQAKAPYQ) is the Jas element. Positions 166–173 (ARKASLHR) match the Nuclear localization signal motif. Positions 175 to 228 (LEKRKDRLQAKAPYQGSPSDASPVKKELQESQPWLGLGPQVAAPDLSLRQESSQ) are disordered.

Belongs to the TIFY/JAZ family. In terms of assembly, interacts with COI1A and COI1B in a coronatine-dependent manner. Coronatine is an analog of jasmonoyl isoleucine (JA-Ile). In terms of processing, ubiquitinated. Targeted for degradation by the SCF(COI1) E3 ubiquitin ligase-proteasome pathway during jasmonate signaling.

It is found in the nucleus. Its function is as follows. Repressor of jasmonate responses. This is Protein TIFY 10a from Oryza sativa subsp. japonica (Rice).